The primary structure comprises 2089 residues: Rho GTPase-activating protein 32 (2089 aa).

Positions 24–52 (TQLTDGDEEEREESFRKMKSSIHSEEDDF) are disordered. The PX; atypical domain maps to 131-245 (GSIQLSLSEE…LTWMEIDNKG (115 aa)). The SH3 domain maps to 259-321 (PAVGAAHVIK…PGHCVELINQ (63 aa)). In terms of domain architecture, Rho-GAP spans 372 to 567 (CDLGEHLLNS…FILNHVDVLF (196 aa)). Residues Ser706, Ser709, Ser732, and Ser738 each carry the phosphoserine modification. The segment covering 828–837 (KLSPSKKDAE) has biased composition (basic and acidic residues). Residues 828-858 (KLSPSKKDAEAGGSQSQTPGSTASSEPVSPV) form a disordered region. Polar residues predominate over residues 840-854 (GSQSQTPGSTASSEP). 4 positions are modified to phosphoserine: Ser852, Ser856, Ser892, and Ser952. Disordered regions lie at residues 955–1037 (QLQL…PPPP), 1119–1141 (CNQP…TDSG), and 1154–1197 (LHRN…SVST). Composition is skewed to polar residues over residues 998–1014 (LSSQ…QTGA) and 1132–1141 (PTQSNTTDSG). Over residues 1175–1191 (DSEKSDDHGSFPEDHAG) the composition is skewed to basic and acidic residues. Ser1206 is modified (phosphoserine). The segment at 1221-1368 (GTSVDKPHHS…GDPAPIFLSD (148 aa)) is disordered. A compositionally biased stretch (basic and acidic residues) spans 1225–1235 (DKPHHSSELTD). Residues 1262-1275 (TATMAYMMATPARA) show a composition bias toward low complexity. The segment at 1395 to 1714 (RAPPLHLRAE…YNYAGLPPRP (320 aa)) is interaction with GAB2. An asymmetric dimethylarginine mark is found at Arg1526 and Arg1536. Ser1588 carries the post-translational modification Phosphoserine. An interaction with FYN region spans residues 1688 to 2089 (SSRDFAFYNP…PHPDTQIHAE (402 aa)). Disordered regions lie at residues 1801–1865 (PGKT…QSSL) and 1881–2002 (RAHQ…LERD). Over residues 1826–1841 (GDERFYRKHPESEFDR) the composition is skewed to basic and acidic residues. Positions 1850–1865 (STQAEKPSLPQKQSSL) are enriched in polar residues. The span at 1881 to 1892 (RAHQEASHRQLC) shows a compositional bias: basic and acidic residues. Residues 1918–1939 (SEPSNYHNSGKYMTSGQGSLTL) show a composition bias toward polar residues. 2 stretches are compositionally biased toward basic and acidic residues: residues 1940-1954 (NHKE…DRPR) and 1961-1975 (PEKH…EEHF). Arg2039 carries the omega-N-methylarginine modification.

It belongs to the PX domain-containing GAP family. As to quaternary structure, interacts with NTRK1 (via cytoplasmic domain); the interaction is independent of the phosphorylation state of NTRK1. Interacts with SHC3 (via SH2 domain). Interacts with RASA1 (via SH3 domain); the interaction is necessary for the Ras activation and cell transforming activities of ARHGAP32. Interacts with GAB1 and GAB2. Interacts with CRK and CRKL. Found in a complex with CRKL and BCAR1; upon EGF stimulation BCAR1 may be replaced by EGFR. Interacts with NCK1 (via SH3 domain); NCK1 recruits phosphorylated BCAR1 to the complex. Isoform 2 interacts with FYN; the interaction appears to be dependent on tyrosine phosphorylation of ARHGAP32. Interacts with EGFR; the interaction requires EGF stimulation and is increased by SHC3. Interacts with CDC42; the interaction requires constitutively active CDC42. Interacts with CTNNB1, DLG4, CDH2 and GRIN2B. Interacts with GPHN. Post-translationally, isoform 2 is phosphorylated on multiple tyrosine residues by FYN. Phosphorylated tyrosine residues undergo dephosphorylation after stimulation of NMDA receptors. Phosphorylated in vitro by CaMK2 in the presence of calmodulin and calcium; which inhibits GAP activity. As to expression, isoform 1 and isoform 2 are highly expressed in brain, specially in cortex, corpus striatum, hippocampus and thalamus. Low levels in cerebellum, colon, small intestine, and kidney.

The protein resides in the postsynaptic density. It localises to the cell projection. Its subcellular location is the dendritic spine. The protein localises to the cytoplasm. It is found in the cell cortex. The protein resides in the endosome membrane. It localises to the golgi apparatus membrane. Its subcellular location is the endoplasmic reticulum membrane. The protein localises to the membrane. Functionally, GTPase-activating protein (GAP) promoting GTP hydrolysis on RHOA, CDC42 and RAC1 small GTPases. May be involved in the differentiation of neuronal cells during the formation of neurite extensions. Involved in NMDA receptor activity-dependent actin reorganization in dendritic spines. May mediate cross-talks between Ras- and Rho-regulated signaling pathways in cell growth regulation. Isoform 2 has higher GAP activity. The protein is Rho GTPase-activating protein 32 (Arhgap32) of Mus musculus (Mouse).